We begin with the raw amino-acid sequence, 214 residues long: Methyltransferase HEMK2 (214 aa).

7 residues coordinate S-adenosyl-L-methionine: Thr-29, Glu-51, Gly-53, Asp-77, Asp-103, Leu-104, and Asn-122. Asn-122 contacts a protein.

Belongs to the eukaryotic/archaeal PrmC-related family. Heterodimer; heterodimerization with TRMT112 is required for S-adenosyl-L-methionine-binding. In terms of processing, ubiquitinated, leading to its degradation by the proteasome. Highly expressed in undifferentiated embryonic stem cells (at protein level). Also expressed in testis and brain, weakly expressed in differentiated embryonic stem cells and kidney. Not expressed in muscle, heart, placenta, pancreas, lung and stomach.

It localises to the nucleus. It carries out the reaction L-lysyl-[histone] + S-adenosyl-L-methionine = N(6)-methyl-L-lysyl-[histone] + S-adenosyl-L-homocysteine + H(+). The enzyme catalyses L-glutaminyl-[protein] + S-adenosyl-L-methionine = N(5)-methyl-L-glutaminyl-[protein] + S-adenosyl-L-homocysteine + H(+). It catalyses the reaction methylarsonous acid + S-adenosyl-L-methionine = dimethylarsinate + S-adenosyl-L-homocysteine + 2 H(+). Its function is as follows. Methyltransferase that can methylate proteins and, to a lower extent, arsenic. Catalytic subunit of a heterodimer with TRMT112, which monomethylates 'Lys-12' of histone H4 (H4K12me1), a modification present at the promoters of numerous genes encoding cell cycle regulators. Catalytic subunit of a heterodimer with TRMT112, which catalyzes N5-methylation of Glu residue of proteins with a Gly-Gln-Xaa-Xaa-Xaa-Arg motif. Methylates ETF1 on 'Gln-185'; ETF1 needs to be complexed to ERF3 in its GTP-bound form to be efficiently methylated. May also play a role in the modulation of arsenic-induced toxicity by mediating the conversion of monomethylarsonous acid (3+) into the less toxic dimethylarsonic acid. It however only plays a limited role in arsenic metabolism compared with AS3MT. The protein is Methyltransferase HEMK2 of Mus musculus (Mouse).